A 264-amino-acid polypeptide reads, in one-letter code: S-adenosylmethionine decarboxylase proenzyme (264 aa).

The active-site Schiff-base intermediate with substrate; via pyruvic acid is the S112. S112 bears the Pyruvic acid (Ser); by autocatalysis mark. H117 serves as the catalytic Proton acceptor; for processing activity. C140 functions as the Proton donor; for catalytic activity in the catalytic mechanism.

The protein belongs to the prokaryotic AdoMetDC family. Type 2 subfamily. Heterooctamer of four alpha and four beta chains arranged as a tetramer of alpha/beta heterodimers. Pyruvate serves as cofactor. Post-translationally, is synthesized initially as an inactive proenzyme. Formation of the active enzyme involves a self-maturation process in which the active site pyruvoyl group is generated from an internal serine residue via an autocatalytic post-translational modification. Two non-identical subunits are generated from the proenzyme in this reaction, and the pyruvate is formed at the N-terminus of the alpha chain, which is derived from the carboxyl end of the proenzyme. The post-translation cleavage follows an unusual pathway, termed non-hydrolytic serinolysis, in which the side chain hydroxyl group of the serine supplies its oxygen atom to form the C-terminus of the beta chain, while the remainder of the serine residue undergoes an oxidative deamination to produce ammonia and the pyruvoyl group blocking the N-terminus of the alpha chain.

It catalyses the reaction S-adenosyl-L-methionine + H(+) = S-adenosyl 3-(methylsulfanyl)propylamine + CO2. It participates in amine and polyamine biosynthesis; S-adenosylmethioninamine biosynthesis; S-adenosylmethioninamine from S-adenosyl-L-methionine: step 1/1. Functionally, catalyzes the decarboxylation of S-adenosylmethionine to S-adenosylmethioninamine (dcAdoMet), the propylamine donor required for the synthesis of the polyamines spermine and spermidine from the diamine putrescine. The chain is S-adenosylmethionine decarboxylase proenzyme from Cronobacter sakazakii (strain ATCC BAA-894) (Enterobacter sakazakii).